We begin with the raw amino-acid sequence, 149 residues long: uncharacterized protein (149 aa).

Positions 1–15 (MQRQTGHMEDKKRTG) are enriched in basic and acidic residues. The interval 1–32 (MQRQTGHMEDKKRTGLESQGTENAFSDGRDGK) is disordered.

This is an uncharacterized protein from Gallus gallus (Chicken).